A 506-amino-acid polypeptide reads, in one-letter code: MEEYQVYLELDISRQQHFLYPLIFREYIYGLAYGHDFNGSIFSENVDYDNKSSLLIVKRLITRMYQQNHLIISANDSKKNQFWGYNKNLYSQIISEGFAIVVEIPLSLQLNSSSEEAEIIKYYKNLRSIHSIFPFFEDKLTYLNYVSDARIPYPIHLEILVQVFRYWAKDAPLFHLLRLFLYEYCNWNNLITPKKLISTFSKSNLRVFLFLYNFYVCEYESIFLFLRNKSSHLQLTSFSVLFERIYFYGKIEHFVEVFAKDFSSTLSFFKEPFIHYVRYQGKSILASKNASLLMNKWKNYLIHLWQYHFDVWSQPRTIQINQFSERSFHLLGYFSNVRLNLSAVRSQMLENAFLIEIVMKKLETIVPIIPLIRSLAKAKFCNVLGHPISKPVWADSSDFDIIDRFLRICRNLSHYYNGSSKKKSLYRVKYILRLSCIKTLARKHKSTVRAFLKRLGSEKLLEEFFTEEEEILSLVFQRASSTLQGLYRGRIWYLDIIFINDLINHE.

Belongs to the intron maturase 2 family. MatK subfamily.

Its subcellular location is the plastid. It localises to the chloroplast. Functionally, usually encoded in the trnK tRNA gene intron. Probably assists in splicing its own and other chloroplast group II introns. The protein is Maturase K of Cytisus scoparius (Scotch broom).